We begin with the raw amino-acid sequence, 171 residues long: Small ribosomal subunit protein uS5 (171 aa).

The 64-residue stretch at 14–77 folds into the S5 DRBM domain; the sequence is YIEKLVNIRR…DKARKAMKNV (64 aa).

It belongs to the universal ribosomal protein uS5 family. Part of the 30S ribosomal subunit. Contacts proteins S4 and S8.

In terms of biological role, with S4 and S12 plays an important role in translational accuracy. Its function is as follows. Located at the back of the 30S subunit body where it stabilizes the conformation of the head with respect to the body. The polypeptide is Small ribosomal subunit protein uS5 (Vesicomyosocius okutanii subsp. Calyptogena okutanii (strain HA)).